Reading from the N-terminus, the 77-residue chain is Acyl carrier protein (77 aa).

A Carrier domain is found at 1–76 (MADFEKVKSI…DVTKFIDNLK (76 aa)). O-(pantetheine 4'-phosphoryl)serine is present on S36.

The protein belongs to the acyl carrier protein (ACP) family. Post-translationally, 4'-phosphopantetheine is transferred from CoA to a specific serine of apo-ACP by AcpS. This modification is essential for activity because fatty acids are bound in thioester linkage to the sulfhydryl of the prosthetic group.

The protein localises to the cytoplasm. It participates in lipid metabolism; fatty acid biosynthesis. Its function is as follows. Carrier of the growing fatty acid chain in fatty acid biosynthesis. This is Acyl carrier protein from Leptospira borgpetersenii serovar Hardjo-bovis (strain JB197).